Here is a 186-residue protein sequence, read N- to C-terminus: Heat shock protein 23 (186 aa).

Positions 53–161 constitute a sHSP domain; it reads VGASSGSSGA…KGNERIVQIQ (109 aa). A disordered region spans residues 163 to 186; it reads VGPAHLNVKENPKEAVEQDNGNDK. The segment covering 169-186 has biased composition (basic and acidic residues); the sequence is NVKENPKEAVEQDNGNDK.

It belongs to the small heat shock protein (HSP20) family.

The chain is Heat shock protein 23 (Hsp23) from Drosophila melanogaster (Fruit fly).